The following is a 500-amino-acid chain: NAD(P)H-quinone oxidoreductase chain 4, chloroplastic (500 aa).

The next 14 helical transmembrane spans lie at 4–24 (FPWL…LFFL), 35–55 (YTLC…CYHF), 87–107 (FGPI…AWPV), 134–154 (LLLF…LLSM), 167–187 (FILY…GIGL), 208–228 (ALEI…SPII), 242–262 (HYST…YGLV), 272–292 (AHSI…VYAA), 305–325 (IAYS…SITD), 330–350 (GALL…FLAG), 364–384 (MGGM…LSMA), 386–406 (LALP…GIIT), 416–436 (ILIT…SLSM), and 462–482 (LFVS…PDFL).

This sequence belongs to the complex I subunit 4 family.

Its subcellular location is the plastid. The protein resides in the chloroplast thylakoid membrane. The catalysed reaction is a plastoquinone + NADH + (n+1) H(+)(in) = a plastoquinol + NAD(+) + n H(+)(out). The enzyme catalyses a plastoquinone + NADPH + (n+1) H(+)(in) = a plastoquinol + NADP(+) + n H(+)(out). The protein is NAD(P)H-quinone oxidoreductase chain 4, chloroplastic of Pelargonium hortorum (Common geranium).